The chain runs to 228 residues: 2,3-bisphosphoglycerate-dependent phosphoglycerate mutase (228 aa).

Substrate-binding positions include 8–15, 21–22, Arg60, 87–90, Lys98, 114–115, and 180–181; these read RHGQSAWN, TG, ERHY, RR, and GN. Residue His9 is the Tele-phosphohistidine intermediate of the active site. The active-site Proton donor/acceptor is Glu87.

This sequence belongs to the phosphoglycerate mutase family. BPG-dependent PGAM subfamily. In terms of assembly, homodimer.

It carries out the reaction (2R)-2-phosphoglycerate = (2R)-3-phosphoglycerate. It functions in the pathway carbohydrate degradation; glycolysis; pyruvate from D-glyceraldehyde 3-phosphate: step 3/5. In terms of biological role, catalyzes the interconversion of 2-phosphoglycerate and 3-phosphoglycerate. The protein is 2,3-bisphosphoglycerate-dependent phosphoglycerate mutase of Rhizorhabdus wittichii (strain DSM 6014 / CCUG 31198 / JCM 15750 / NBRC 105917 / EY 4224 / RW1) (Sphingomonas wittichii).